The primary structure comprises 187 residues: Peptidyl-tRNA hydrolase (187 aa).

Y14 contacts tRNA. Catalysis depends on H19, which acts as the Proton acceptor. Positions 60 and 62 each coordinate tRNA.

It belongs to the PTH family. In terms of assembly, monomer.

It is found in the cytoplasm. The catalysed reaction is an N-acyl-L-alpha-aminoacyl-tRNA + H2O = an N-acyl-L-amino acid + a tRNA + H(+). Hydrolyzes ribosome-free peptidyl-tRNAs (with 1 or more amino acids incorporated), which drop off the ribosome during protein synthesis, or as a result of ribosome stalling. Functionally, catalyzes the release of premature peptidyl moieties from peptidyl-tRNA molecules trapped in stalled 50S ribosomal subunits, and thus maintains levels of free tRNAs and 50S ribosomes. This chain is Peptidyl-tRNA hydrolase, found in Pseudothermotoga lettingae (strain ATCC BAA-301 / DSM 14385 / NBRC 107922 / TMO) (Thermotoga lettingae).